Here is a 163-residue protein sequence, read N- to C-terminus: Shikimate kinase (163 aa).

10–15 (GVGKSS) lines the ATP pocket. Mg(2+) is bound at residue Ser14. Substrate-binding residues include Asp28, Arg52, and Gly75. Arg116 is a binding site for ATP. Arg134 provides a ligand contact to substrate. Residue Arg151 coordinates ATP.

It belongs to the shikimate kinase family. As to quaternary structure, monomer. Mg(2+) serves as cofactor.

It localises to the cytoplasm. The catalysed reaction is shikimate + ATP = 3-phosphoshikimate + ADP + H(+). Its pathway is metabolic intermediate biosynthesis; chorismate biosynthesis; chorismate from D-erythrose 4-phosphate and phosphoenolpyruvate: step 5/7. Catalyzes the specific phosphorylation of the 3-hydroxyl group of shikimic acid using ATP as a cosubstrate. This Streptococcus thermophilus (strain ATCC BAA-491 / LMD-9) protein is Shikimate kinase.